A 485-amino-acid chain; its full sequence is Trk system potassium uptake protein TrkH (485 aa).

The Cytoplasmic portion of the chain corresponds to 1 to 2 (MQ). Residues 3–29 (FRSIIRIVGLLLALFSVTMLAPALVAL) traverse the membrane as a helical segment. Topologically, residues 30–35 (LYRDGA) are periplasmic. The helical transmembrane segment at 36 to 57 (GVPFVTTFFVLLFCGAMCWFPN) threads the bilayer. The Cytoplasmic portion of the chain corresponds to 58–65 (RRHKHELK). Residues 66-90 (SRDGFLIVVLFWTVLGSAGSLPFLI) form a helical membrane-spanning segment. Positions 98-109 (VTDAFFESFSAL) form an intramembrane region, helical; Pore-forming. An intramembrane segment occupies 110–115 (TTTGAT). The selectivity filter part 1 stretch occupies residues 110 to 115 (TTTGAT). 2 residues coordinate K(+): threonine 111 and threonine 112. At 116–124 (VIVGLDELP) the chain is on the periplasmic side. Residues 125-150 (KAILFYRQFLQWFGGMGIIVLAVAIL) traverse the membrane as a helical segment. The Cytoplasmic segment spans residues 151–177 (PVLGIGGMQLYRAEIPGPVKDTKMTPR). The chain crosses the membrane as a helical span at residues 178-202 (IAETAKALWYIYLSLTIACAVAFWL). The Periplasmic segment spans residues 203–205 (AGM). Threonine 206 is an intramembrane region. The helical; Pore-forming intramembrane region spans 207-218 (PFDAISHSFSTI). An intramembrane segment occupies 219–224 (AIGGFS). The interval 219–224 (AIGGFS) is selectivity filter part 2. The K(+) site is built by isoleucine 220 and glycine 221. Residues 225-234 (THDASMGYFD) are Periplasmic-facing. The helical intramembrane region spans 235–250 (SYAINLITVVFLLISA). The helical transmembrane segment at 276–296 (FRAFIFIQVLLFLVCFLLLLK) threads the bilayer. Positions 303–318 (PYDAFDQALFQTVSIS) form an intramembrane region, helical; Pore-forming. An intramembrane segment occupies 319 to 324 (TTAGFT). The selectivity filter part 3 stretch occupies residues 319 to 324 (TTAGFT). 2 residues coordinate K(+): threonine 320 and alanine 321. Residues 325 to 332 (TTGFADWP) lie on the Periplasmic side of the membrane. The segment at residues 333-344 (LFLPVLLLFSSF) is an intramembrane region (helical). The note=Loop between two helices intramembrane region spans 345 to 357 (IGGCAGSTGGGMK). A helical membrane pass occupies residues 392 to 419 (PQRVVDAVWGFFSAYALVFVVCMLGLIA). Topologically, residues 420–421 (TG) are periplasmic. Residues 422–423 (MD) lie within the membrane without spanning it. Residues 424–434 (ELSAFSAVAAT) constitute an intramembrane region (helical; Pore-forming). An intramembrane segment occupies 435–441 (LNNLGPG). A selectivity filter part 4 region spans residues 436–441 (NNLGPG). Residues asparagine 437 and leucine 438 each contribute to the K(+) site. The Periplasmic segment spans residues 442–453 (LGEVALHFGDVN). An intramembrane region (helical) is located at residues 454-465 (DKAKWVLIVSML).

The protein belongs to the TrkH potassium transport family. Homodimer.

Its subcellular location is the cell inner membrane. Low-affinity potassium transport system. Interacts with trk system potassium uptake protein TrkA and requires TrkE for transport activity. Selective for permeation of potassium ion and rubidium ion over smaller ions such as natrium or litium. The chain is Trk system potassium uptake protein TrkH from Vibrio parahaemolyticus serotype O3:K6 (strain RIMD 2210633).